Here is a 78-residue protein sequence, read N- to C-terminus: MSDIAERVKKIVVEHLGVEPEKVTEASNFIDDLGADSLDTVELVMAFEEEFNVEIPDDAAETIQTVGDAIKFLEKNSA.

One can recognise a Carrier domain in the interval 2–77 (SDIAERVKKI…DAIKFLEKNS (76 aa)). The residue at position 37 (serine 37) is an O-(pantetheine 4'-phosphoryl)serine.

It belongs to the acyl carrier protein (ACP) family. Post-translationally, 4'-phosphopantetheine is transferred from CoA to a specific serine of apo-ACP by AcpS. This modification is essential for activity because fatty acids are bound in thioester linkage to the sulfhydryl of the prosthetic group.

It is found in the cytoplasm. It participates in lipid metabolism; fatty acid biosynthesis. Its function is as follows. Carrier of the growing fatty acid chain in fatty acid biosynthesis. In Methylorubrum extorquens (strain CM4 / NCIMB 13688) (Methylobacterium extorquens), this protein is Acyl carrier protein.